The following is a 455-amino-acid chain: MARPVVAIIGRPNVGKSTLVNRLCHSREAIVHDEPGVTRDRTYQDGYWGDRDFKVVDTGGLVFDDDSEFLPEIREQAALALEEASVALVIVDGQQGVTASDEAIAEFLRGQRCPALLAVNKCESPEQGLAMAAEFWSLGLGEPYPISAIHGAGTAELLDQVLTYLPPKSEEGDSEEPIQLAIIGRPNVGKSSLLNAICGEQRAIVSPIRGTTRDTIDTSLVRENRPWRLVDTAGIRRRRSVNYGPEFFGINRSFKAIERSDVCVLVIDALDGVTEQDQRLAGRIEEDGRACVVVVNKWDAVEKDSHTMTAMEKELRAKLYFLDWAPMLFTSALTGQRVDSIFALAALAVEQHRRRVSTSVVNEVLKEALSWRSPPTTRGGRQGRLYYGTQVASRPPSFTLFVNDPKLFGDTYRRYVERQIREGLGFDGTPLKLFWRGKQQRDAERDLARQQNRQG.

EngA-type G domains are found at residues 4–169 (PVVA…PPKS) and 178–353 (IQLA…EQHR). Residues 10 to 17 (GRPNVGKS), 57 to 61 (DTGGL), 120 to 123 (NKCE), 184 to 191 (GRPNVGKS), 231 to 235 (DTAGI), and 296 to 299 (NKWD) contribute to the GTP site. The region spanning 354-439 (RRVSTSVVNE…PLKLFWRGKQ (86 aa)) is the KH-like domain.

It belongs to the TRAFAC class TrmE-Era-EngA-EngB-Septin-like GTPase superfamily. EngA (Der) GTPase family. In terms of assembly, associates with the 50S ribosomal subunit.

In terms of biological role, GTPase that plays an essential role in the late steps of ribosome biogenesis. This Synechococcus sp. (strain WH7803) protein is GTPase Der.